We begin with the raw amino-acid sequence, 220 residues long: LHFPL tetraspan subfamily member 1 protein (220 aa).

Positions 1 to 20 are cleaved as a signal peptide; the sequence is MRNSLTMVGTFWAFLSLVTA. 2 consecutive transmembrane segments (helical) span residues 86 to 106 and 122 to 142; these read VVTG…VLGC and AAQF…PLGW. Asn-153 is a glycosylation site (N-linked (GlcNAc...) asparagine). A helical transmembrane segment spans residues 165–185; the sequence is LGWAYYCAGGGAAAAMLICTW.

The protein belongs to the LHFP family. In terms of tissue distribution, widely expressed. Strongly expressed in vagina and ovary. Weakly expressed in spleen, kidney, thymus, testis, brain, lung, intestine and uterus.

It localises to the membrane. In Mus musculus (Mouse), this protein is LHFPL tetraspan subfamily member 1 protein.